The following is a 322-amino-acid chain: Solute carrier family 35 member B1 (322 aa).

Transmembrane regions (helical) follow at residues 12-32 (LRLP…GILQ), 51-71 (FALT…KILI), 85-105 (WLYA…NSAL), 136-156 (YPLA…LFMY), 168-188 (TVGF…LTGV), 210-230 (LWST…WEFL), 243-263 (ILLF…TVVY), and 285-305 (VILF…LVFL). Positions 318–322 (KKTSH) match the Di-lysine motif motif.

The protein belongs to the nucleotide-sugar transporter family. SLC35B subfamily.

It is found in the endoplasmic reticulum membrane. It catalyses the reaction ADP(in) + ATP(out) = ADP(out) + ATP(in). The enzyme catalyses UDP(out) + ATP(in) = UDP(in) + ATP(out). It carries out the reaction UTP(out) + ATP(in) = UTP(in) + ATP(out). The catalysed reaction is dATP(out) + ATP(in) = dATP(in) + ATP(out). ATP:ADP antiporter that catalyzes the exchange of ATP and ADP across the endoplasmic reticulum (ER) membrane. Imports ATP from the cytosol to the ER lumen and exports ADP in the opposite direction. Regulates ER energy metabolism and protein biogenesis. Appears to be part of a calcium-dependent ER to cytosol low energy response axis, where calcium efflux from ER to the cytosol triggers ATP import into the ER lumen to maintain sufficient ATP supply. Provides ATP to ER chaperone HSPA5 that drives protein folding and trafficking in the ER. Can transport dATP, UTP or UDP in exchange for ATP, but the physiological relevance of this process remains to be established. The sequence is that of Solute carrier family 35 member B1 (Slc35b1) from Rattus norvegicus (Rat).